Reading from the N-terminus, the 929-residue chain is Patatin-like phospholipase domain-containing protein CNE02340 (929 aa).

The segment at 37–85 (QPLDGDSSPLSPRSFSLPPESPQLSTASVKAPPPTWKYGPDNGTLRSGR) is disordered. The span at 43-54 (SSPLSPRSFSLP) shows a compositional bias: low complexity. The chain crosses the membrane as a helical span at residues 126–146 (WPLLFFIFFIIYLEFSAYVIT). Positions 301 to 493 (LCLSGGASFG…REDIPLGSLH (193 aa)) constitute a PNPLA domain. A GXSXG motif is present at residues 332 to 336 (GTSAG). Ser334 acts as the Nucleophile in catalysis. The active-site Proton acceptor is the Asp480. Disordered regions lie at residues 644–765 (ALSH…NFGD), 778–806 (LSSP…QRFR), and 818–929 (VSES…QDGA). 2 stretches are compositionally biased toward polar residues: residues 652 to 664 (NDPA…TNPE) and 745 to 764 (PTHS…SNFG). The span at 779-806 (SSPFRSIRSNTSSSSNNVQSPSSSQRFR) shows a compositional bias: low complexity. Positions 856–878 (VESHSDRSEDEMLHSGANVKEEY) are enriched in basic and acidic residues.

It belongs to the PLPL family.

It localises to the membrane. Its function is as follows. Probable lipid hydrolase. The protein is Patatin-like phospholipase domain-containing protein CNE02340 of Cryptococcus neoformans var. neoformans serotype D (strain JEC21 / ATCC MYA-565) (Filobasidiella neoformans).